The following is a 998-amino-acid chain: Methyl sulfide methyltransferase-associated sensor (998 aa).

The PAS 1 domain maps to 40–77 (FGYSPKDFISGGLGYADIIYPADLEIAVSQFFSYVEKD). In terms of domain architecture, PAC 1 spans 117–169 (FTQQYRLLNKSGDVLWVEAEIKVLEEEEGKAGLFQVTVFDISRWKHTEKAMPA). In terms of domain architecture, PAS 2 spans 209-246 (LGYTPEDFTSGRIVYTDIIHPDDLDNVRAEVSKNTEEG). The region spanning 250–302 (FSKEYRVLAKSGEVRYVDERTLIRRNEKGEITCYQGILLDITQRKEAEELILS) is the PAC 2 domain. Residues 314-458 (ASLDEVLLLL…NAYLAGIAIE (145 aa)) enclose the GAF 1 domain. Positions 469–540 (SENRFRTIFD…ENMQKIKAEG (72 aa)) constitute a PAS 3 domain. One can recognise a GAF 2 domain in the interval 609 to 752 (ASLKEITDFA…LMQGMWQLIQ (144 aa)). Heme is bound at residue Cys-656. Residues 783 to 998 (EFVEEMMFPE…GNLMHVKLPK (216 aa)) form the Histidine kinase domain.

The cofactor is heme. Post-translationally, autophosphorylates: autophosphorylation is dependent on the redox state of heme cofactor and is promoted upon reduction.

It is found in the cytoplasm. The enzyme catalyses ATP + protein L-histidine = ADP + protein N-phospho-L-histidine.. Heme-binding sensor kinase component part of a two-component regulatory system involved in methyl sulfide metabolism. Does not act as a phytochrome-like photoreceptor. The sequence is that of Methyl sulfide methyltransferase-associated sensor (msmS) from Methanosarcina acetivorans (strain ATCC 35395 / DSM 2834 / JCM 12185 / C2A).